Reading from the N-terminus, the 184-residue chain is Glutathione-regulated potassium-efflux system ancillary protein KefG (184 aa).

This sequence belongs to the NAD(P)H dehydrogenase (quinone) family. KefG subfamily. Interacts with KefB.

Its subcellular location is the cell inner membrane. It catalyses the reaction a quinone + NADH + H(+) = a quinol + NAD(+). The enzyme catalyses a quinone + NADPH + H(+) = a quinol + NADP(+). Functionally, regulatory subunit of a potassium efflux system that confers protection against electrophiles. Required for full activity of KefB. This Cronobacter sakazakii (strain ATCC BAA-894) (Enterobacter sakazakii) protein is Glutathione-regulated potassium-efflux system ancillary protein KefG.